The primary structure comprises 483 residues: Argininosuccinate lyase (483 aa).

This sequence belongs to the lyase 1 family. Argininosuccinate lyase subfamily.

It localises to the cytoplasm. It carries out the reaction 2-(N(omega)-L-arginino)succinate = fumarate + L-arginine. Its pathway is amino-acid biosynthesis; L-arginine biosynthesis; L-arginine from L-ornithine and carbamoyl phosphate: step 3/3. The protein is Argininosuccinate lyase of Archaeoglobus fulgidus (strain ATCC 49558 / DSM 4304 / JCM 9628 / NBRC 100126 / VC-16).